Here is a 500-residue protein sequence, read N- to C-terminus: L-arabinose isomerase (500 aa).

Residues Glu306, Glu333, His349, and His448 each contribute to the Mn(2+) site.

Belongs to the arabinose isomerase family. Requires Mn(2+) as cofactor.

The catalysed reaction is beta-L-arabinopyranose = L-ribulose. It participates in carbohydrate degradation; L-arabinose degradation via L-ribulose; D-xylulose 5-phosphate from L-arabinose (bacterial route): step 1/3. Its function is as follows. Catalyzes the conversion of L-arabinose to L-ribulose. This is L-arabinose isomerase from Cellvibrio japonicus (strain Ueda107) (Pseudomonas fluorescens subsp. cellulosa).